Here is a 347-residue protein sequence, read N- to C-terminus: NADH-ubiquinone oxidoreductase chain 2 (347 aa).

11 consecutive transmembrane segments (helical) span residues 1 to 21 (MNPL…LITA), 25 to 45 (HWFL…PVLT), 55 to 75 (AAIK…MAIL), 96 to 116 (TMML…FWVP), 123 to 143 (TLMS…SIMY), 145 to 165 (IFPV…IMVG), 178 to 198 (ILAY…PYNP), 200 to 220 (ITIF…LALN), 237 to 257 (LTWL…LPPL), 274 to 294 (GTLI…YFYM), and 324 to 344 (FLLP…PLTF).

The protein belongs to the complex I subunit 2 family. In terms of assembly, core subunit of respiratory chain NADH dehydrogenase (Complex I) which is composed of 45 different subunits. Interacts with TMEM242.

The protein localises to the mitochondrion inner membrane. It catalyses the reaction a ubiquinone + NADH + 5 H(+)(in) = a ubiquinol + NAD(+) + 4 H(+)(out). Its function is as follows. Core subunit of the mitochondrial membrane respiratory chain NADH dehydrogenase (Complex I) which catalyzes electron transfer from NADH through the respiratory chain, using ubiquinone as an electron acceptor. Essential for the catalytic activity and assembly of complex I. This chain is NADH-ubiquinone oxidoreductase chain 2, found in Hylobates lar (Lar gibbon).